Here is a 203-residue protein sequence, read N- to C-terminus: Imidazoleglycerol-phosphate dehydratase (203 aa).

This sequence belongs to the imidazoleglycerol-phosphate dehydratase family.

The protein resides in the cytoplasm. The enzyme catalyses D-erythro-1-(imidazol-4-yl)glycerol 3-phosphate = 3-(imidazol-4-yl)-2-oxopropyl phosphate + H2O. Its pathway is amino-acid biosynthesis; L-histidine biosynthesis; L-histidine from 5-phospho-alpha-D-ribose 1-diphosphate: step 6/9. This chain is Imidazoleglycerol-phosphate dehydratase, found in Parvibaculum lavamentivorans (strain DS-1 / DSM 13023 / NCIMB 13966).